Here is a 283-residue protein sequence, read N- to C-terminus: Pantothenate synthetase (283 aa).

Residue 30-37 (MGNLHDGH) participates in ATP binding. Catalysis depends on His37, which acts as the Proton donor. Gln61 is a binding site for (R)-pantoate. Position 61 (Gln61) interacts with beta-alanine. 149–152 (GEKD) contacts ATP. Gln155 contributes to the (R)-pantoate binding site. 186-189 (LSSR) contributes to the ATP binding site.

It belongs to the pantothenate synthetase family. In terms of assembly, homodimer.

It is found in the cytoplasm. The catalysed reaction is (R)-pantoate + beta-alanine + ATP = (R)-pantothenate + AMP + diphosphate + H(+). Its pathway is cofactor biosynthesis; (R)-pantothenate biosynthesis; (R)-pantothenate from (R)-pantoate and beta-alanine: step 1/1. Functionally, catalyzes the condensation of pantoate with beta-alanine in an ATP-dependent reaction via a pantoyl-adenylate intermediate. This chain is Pantothenate synthetase, found in Escherichia fergusonii (strain ATCC 35469 / DSM 13698 / CCUG 18766 / IAM 14443 / JCM 21226 / LMG 7866 / NBRC 102419 / NCTC 12128 / CDC 0568-73).